Consider the following 258-residue polypeptide: MSNLYTERVLSVHHWNDTLFSFKTTRNPGLRFKTGQFVMIGLEVDGRPLMRAYSIASPNYEEHLEFFSIKVPDGPLTSRLQHLKEGDELMVSRKPTGTLVHDDLLPGKHLYLLSTGTGMAPFLSVIQDPETYERYEKVILVHGVRWVSELAYADFITKVLPEHEYFGDQVKEKLIYYPLVTREPFRNQGRQTDLMRSGKLFEDIGLPPMNPQDDRAMICGSPSMLEETSAVLDSFGLKISPRMGEPGDYLIERAFVEK.

In terms of domain architecture, FAD-binding FR-type spans 2-102 (SNLYTERVLS…RKPTGTLVHD (101 aa)). Residues R51, A52, Y53, S54, F67, I69, L76, T77, and T117 each contribute to the FAD site. Residues V144, R145, T181, R182, R190, S223, E227, F255, and E257 each contribute to the NADP(+) site. Residues F255, E257, and K258 each contribute to the FAD site.

The protein belongs to the ferredoxin--NADP reductase type 1 family. As to quaternary structure, monomer. FAD serves as cofactor.

The catalysed reaction is 2 reduced [2Fe-2S]-[ferredoxin] + NADP(+) + H(+) = 2 oxidized [2Fe-2S]-[ferredoxin] + NADPH. In terms of biological role, transports electrons between ferredoxin and NADPH. Provides electrons to heme oxygenase (pigA) allowing anaerobic heme degradation. Provides electrons necessary to reduce and mobilize Fe(3+) in a heterooligomeric bacterioferritin (BFR) complex to Fe(2+). Reduction of Fe(3+) in a pure FtnA BFR does not require Bfd. Reduction of Fe(3+) in a pure BfrB BFR does require Bfd. This is Ferredoxin--NADP reductase from Pseudomonas aeruginosa (strain ATCC 15692 / DSM 22644 / CIP 104116 / JCM 14847 / LMG 12228 / 1C / PRS 101 / PAO1).